Consider the following 356-residue polypeptide: Arginine kinase (356 aa).

A Phosphagen kinase N-terminal domain is found at 8–91; it reads EKLEAGFKKL…FDPIIEDYHG (84 aa). 64–68 lines the substrate pocket; the sequence is GVGIY. Positions 119-356 constitute a Phosphagen kinase C-terminal domain; the sequence is YVISTRVRCG…LELIKIEGSL (238 aa). Residues 122 to 126 and H185 contribute to the ATP site; that span reads STRVR. E225 is a binding site for substrate. ATP is bound at residue R229. C271 provides a ligand contact to substrate. ATP contacts are provided by residues 280–284 and 309–314; these read RASVH and RGSTGE. E314 is a substrate binding site.

This sequence belongs to the ATP:guanido phosphotransferase family.

It carries out the reaction L-arginine + ATP = N(omega)-phospho-L-arginine + ADP + H(+). The sequence is that of Arginine kinase (ARGK) from Schistocerca americana (American grasshopper).